The following is a 210-amino-acid chain: Putative transmembrane protein DDB_G0267530 (210 aa).

Residues 1 to 40 are disordered; that stretch reads MGVEDQPQTQPQTQPQQQPQMGYQPQMGYQPQAQMGYQPQ. 2 helical membrane-spanning segments follow: residues 119–139 and 148–168; these read VIVFIIGFFFSIVWLGGFFFI and TFGILSVVFFFLVLVIVVIVV.

The protein resides in the membrane. This is Putative transmembrane protein DDB_G0267530 from Dictyostelium discoideum (Social amoeba).